We begin with the raw amino-acid sequence, 158 residues long: MVKSEINNNGGEPVFAVLTQYLKDFSFENPSAPRSLRPREKAPQIDININVNANPIGDDNYDVVLSLSVKANDNNETLFHVELIYGGVFHIKDIPQEHIMPLVFIECPRLLFPFARQIISDATQNGGFPPLWIDPIDFAALFQKRVAEEQKNSQTQPS.

Belongs to the SecB family. Homotetramer, a dimer of dimers. One homotetramer interacts with 1 SecA dimer.

Its subcellular location is the cytoplasm. In terms of biological role, one of the proteins required for the normal export of preproteins out of the cell cytoplasm. It is a molecular chaperone that binds to a subset of precursor proteins, maintaining them in a translocation-competent state. It also specifically binds to its receptor SecA. In Bartonella quintana (strain Toulouse) (Rochalimaea quintana), this protein is Protein-export protein SecB.